The primary structure comprises 218 residues: Glutathione S-transferase class-mu 26 kDa isozyme (218 aa).

Positions 2–83 (SPILGYWKIK…YIADKHNMLG (82 aa)) constitute a GST N-terminal domain. Residues 7–8 (YW), 41–45 (WRNKK), 54–55 (NL), and 67–68 (QS) each bind glutathione. A GST C-terminal domain is found at 85–203 (CPKERAEISM…KSSKYIAWPL (119 aa)). A substrate-binding site is contributed by Tyr-111.

This sequence belongs to the GST superfamily. Mu family. In terms of assembly, homodimer.

It carries out the reaction RX + glutathione = an S-substituted glutathione + a halide anion + H(+). In terms of biological role, conjugation of reduced glutathione to a wide number of exogenous and endogenous hydrophobic electrophiles. Functionally, GST isoenzymes appear to play a central role in the parasite detoxification system. Other functions are also suspected including a role in increasing the solubility of haematin in the parasite gut. The sequence is that of Glutathione S-transferase class-mu 26 kDa isozyme from Schistosoma japonicum (Blood fluke).